Reading from the N-terminus, the 62-residue chain is Large ribosomal subunit protein eL24 (62 aa).

Cysteine 6, cysteine 9, cysteine 32, and cysteine 36 together coordinate Zn(2+). Residues 6-36 form a C4-type zinc finger; sequence CYFCGKMLEPGTGKLYVKKDGSTYFMCSSKC.

The protein belongs to the eukaryotic ribosomal protein eL24 family. As to quaternary structure, part of the 50S ribosomal subunit. Forms a cluster with proteins L3 and L14. Requires Zn(2+) as cofactor.

Binds to the 23S rRNA. In Methanosarcina acetivorans (strain ATCC 35395 / DSM 2834 / JCM 12185 / C2A), this protein is Large ribosomal subunit protein eL24.